A 317-amino-acid polypeptide reads, in one-letter code: Acetyl-coenzyme A carboxylase carboxyl transferase subunit alpha (317 aa).

The region spanning 37-292 is the CoA carboxyltransferase C-terminal domain; it reads RLEKKAEKLR…RICLKKHLDD (256 aa).

The protein belongs to the AccA family. In terms of assembly, acetyl-CoA carboxylase is a heterohexamer composed of biotin carboxyl carrier protein (AccB), biotin carboxylase (AccC) and two subunits each of ACCase subunit alpha (AccA) and ACCase subunit beta (AccD).

The protein localises to the cytoplasm. It carries out the reaction N(6)-carboxybiotinyl-L-lysyl-[protein] + acetyl-CoA = N(6)-biotinyl-L-lysyl-[protein] + malonyl-CoA. It participates in lipid metabolism; malonyl-CoA biosynthesis; malonyl-CoA from acetyl-CoA: step 1/1. Component of the acetyl coenzyme A carboxylase (ACC) complex. First, biotin carboxylase catalyzes the carboxylation of biotin on its carrier protein (BCCP) and then the CO(2) group is transferred by the carboxyltransferase to acetyl-CoA to form malonyl-CoA. This is Acetyl-coenzyme A carboxylase carboxyl transferase subunit alpha from Syntrophotalea carbinolica (strain DSM 2380 / NBRC 103641 / GraBd1) (Pelobacter carbinolicus).